A 396-amino-acid polypeptide reads, in one-letter code: MPDIGLEEVEIIEILVSINEKIAPEQGLITVEGDKTSMEIPSPISGIVKHIFIKIGEKIKTDALIMRCEVENIDFHVKKKEEICLDNNVLNKVEKNFKKDIFFHATPLIRRLARNLNINLYDVVGTGPKNRILKEDLDLYQSNIKENLIEEKNKINFGDSKKSKTKELELSDIQKNIGNNLHRNWMNIPHVTQFDEVDITILEKFRQKYNNEKRNQKKTNENITILVFIIKVVAYALEKFPIFNSSLNINNKKIILKKYINIGFAIDVNNDLFVPVLKDVNKKNIKQLSSELILLSEKARTRKLNIEDMTGGCFTISNLGGIGGSWFSPIINSPEVAILGISKSQIKPSWNGKEFIPSLMLPLSLSYDHRVINGAYAARFITFISRVLSDMHFLIM.

In terms of domain architecture, Lipoyl-binding spans 1 to 69; that stretch reads MPDIGLEEVE…KTDALIMRCE (69 aa). Residue lysine 35 is modified to N6-lipoyllysine. A Peripheral subunit-binding (PSBD) domain is found at 104-141; the sequence is HATPLIRRLARNLNINLYDVVGTGPKNRILKEDLDLYQ. Histidine 369 is an active-site residue.

Belongs to the 2-oxoacid dehydrogenase family. As to quaternary structure, forms a 24-polypeptide structural core with octahedral symmetry. (R)-lipoate serves as cofactor.

The enzyme catalyses N(6)-[(R)-dihydrolipoyl]-L-lysyl-[protein] + acetyl-CoA = N(6)-[(R)-S(8)-acetyldihydrolipoyl]-L-lysyl-[protein] + CoA. In terms of biological role, the pyruvate dehydrogenase complex catalyzes the overall conversion of pyruvate to acetyl-CoA and CO(2). It contains multiple copies of three enzymatic components: pyruvate dehydrogenase (E1), dihydrolipoamide acetyltransferase (E2) and lipoamide dehydrogenase (E3). The chain is Dihydrolipoyllysine-residue acetyltransferase component of pyruvate dehydrogenase complex (aceF) from Buchnera aphidicola subsp. Acyrthosiphon pisum (strain APS) (Acyrthosiphon pisum symbiotic bacterium).